The following is a 73-amino-acid chain: Disintegrin molossin (73 aa).

Residues 1-73 (EAGIECDCGS…ADCPRNRFHA (73 aa)) enclose the Disintegrin domain. Intrachain disulfides connect C6-C21, C8-C16, C15-C38, C29-C35, C34-C59, and C47-C66. The short motif at 51 to 53 (RGD) is the Cell attachment site element.

The protein belongs to the venom metalloproteinase (M12B) family. P-II subfamily. P-IIa sub-subfamily. As to quaternary structure, monomer (disintegrin). Expressed by the venom gland.

Its subcellular location is the secreted. Inhibits fibrinogen interaction with platelets. Acts by binding to alpha-IIb/beta-3 (ITGA2B/ITGB3) on the platelet surface and inhibits aggregation induced by ADP, thrombin, platelet-activating factor and collagen. In Crotalus molossus molossus (Northern black-tailed rattlesnake), this protein is Disintegrin molossin.